The sequence spans 584 residues: Cytochrome c oxidase subunit 1 (584 aa).

Residues 1-25 (MTAVAPRVDGHVAPQRPEPTGHARK) form a disordered region. The helical transmembrane segment at 43–63 (IMYIIMSFSFFFLGGLMALLI) threads the bilayer. Residue His-87 coordinates Fe(II)-heme a. 6 helical membrane passes run 90 to 110 (VMLL…VLPL), 122 to 142 (LNAF…TGFL), 171 to 191 (MWIV…INML), 214 to 234 (IFVV…AALG), 259 to 279 (LFWF…FGIV), and 292 to 312 (FGYV…MAVW). Cu cation contacts are provided by His-265 and Tyr-269. A cross-link (1'-histidyl-3'-tyrosine (His-Tyr)) is located at residues 265 to 269 (HPEVY). Positions 314 and 315 each coordinate Cu cation. 2 helical membrane-spanning segments follow: residues 316-336 (MFVT…LISV) and 360-380 (MIWS…GIML). Heme a3 is bound at residue His-398. A run of 3 helical transmembrane segments spans residues 399-419 (FHYT…YFWF), 434-454 (IHFW…HWVG), and 477-497 (ISTV…WNVF). His-400 lines the Fe(II)-heme a pocket. The segment at 564–584 (HDDINAPELGTAPALASDSSR) is disordered.

Associates with subunits II, III and IV to form cytochrome c oxidase. The 4 subunit cytochrome c oxidase forms a supercomplex with the menaquinol-cytochrome c reductase complex (cytochrome bc1). The cofactor is Cu(2+). Requires heme as cofactor.

The protein resides in the cell membrane. It carries out the reaction 4 Fe(II)-[cytochrome c] + O2 + 8 H(+)(in) = 4 Fe(III)-[cytochrome c] + 2 H2O + 4 H(+)(out). Its pathway is energy metabolism; oxidative phosphorylation. Functionally, cytochrome c oxidase is the component of the respiratory chain that catalyzes the reduction of oxygen to water. Subunits 1-3 form the functional core of the enzyme complex. CO I is the catalytic subunit of the enzyme. Electrons originating in cytochrome c are transferred via the copper A center of subunit 2 and heme A of subunit 1 to the bimetallic center formed by heme A3 and copper B. This Corynebacterium glutamicum (strain ATCC 13032 / DSM 20300 / JCM 1318 / BCRC 11384 / CCUG 27702 / LMG 3730 / NBRC 12168 / NCIMB 10025 / NRRL B-2784 / 534) protein is Cytochrome c oxidase subunit 1 (ctaD).